A 433-amino-acid chain; its full sequence is MLSYKKVLIVGRPNVGKSALFNRILDTKRSITESTYGVTRDLVEEVCKVDSFKFKLIDTGGFTILKDEISKIVVQKVLSSLEKVDLILLVLDINEILLEDYQIIERLRKYSSKVVLVLNKVDTKDKECLAHEFHNLGFKRYFLVSAAHCRGITKLRDFLKVEVGEVGIESGADIKVGIIGKPNSGKSTLINYLSGNEIAIVSDQPGTTRDFIKTKFTRNGKVFEVVDTAGIRRRARVNEIVEYYSVNRALKVIDMVDIVFLLIDVQEKLTSQDKKIAHYVTKKGKGIVIVFSKWDLVDESKGYFEALKSHVKFFFPILNFAPIFRISVHKRIGLDSLFKESFKLKDQLELKTSTPDLNKMLNLWIKDYHLNISHKIKYITQVSTNPVKFILFANKIKNFPNSYYNYLVNNLRKIGYKNIPILVELKEKIRDLK.

2 EngA-type G domains span residues 5–167 (KKVL…GEVG) and 174–349 (IKVG…DQLE). Residues 11–18 (GRPNVGKS), 58–62 (DTGGF), 119–122 (NKVD), 180–187 (GKPNSGKS), 227–231 (DTAGI), and 292–295 (SKWD) each bind GTP. A KH-like domain is found at 349–429 (ELKTSTPDLN…PILVELKEKI (81 aa)).

The protein belongs to the TRAFAC class TrmE-Era-EngA-EngB-Septin-like GTPase superfamily. EngA (Der) GTPase family. As to quaternary structure, associates with the 50S ribosomal subunit.

Its function is as follows. GTPase that plays an essential role in the late steps of ribosome biogenesis. This is GTPase Der from Borreliella burgdorferi (strain ATCC 35210 / DSM 4680 / CIP 102532 / B31) (Borrelia burgdorferi).